The sequence spans 168 residues: Endoribonuclease YbeY (168 aa).

Residues H123, H127, and H133 each coordinate Zn(2+).

This sequence belongs to the endoribonuclease YbeY family. Zn(2+) is required as a cofactor.

It is found in the cytoplasm. Its function is as follows. Single strand-specific metallo-endoribonuclease involved in late-stage 70S ribosome quality control and in maturation of the 3' terminus of the 16S rRNA. The sequence is that of Endoribonuclease YbeY from Francisella tularensis subsp. holarctica (strain LVS).